The primary structure comprises 840 residues: Microcephalin (840 aa).

Residues 1-93 form the BRCT 1 domain; the sequence is MAAHILKDVV…AHIDESLFPA (93 aa). A disordered region spans residues 184 to 206; sequence KEKRENLSPSSSQMIQQSHDNPS. A compositionally biased stretch (polar residues) spans 190-206; that stretch reads LSPSSSQMIQQSHDNPS. 4 positions are modified to phosphoserine: S279, S287, S296, and S333. Disordered stretches follow at residues 313–379 and 418–437; these read PDQK…SIRR and PDNLKERNSENLPPTSQLPS. Phosphothreonine is present on T335. Positions 355-378 are enriched in basic residues; that stretch reads KRQRVSHGSHSPSKGKSKRKRSIR. Positions 427–437 are enriched in polar residues; that stretch reads ENLPPTSQLPS. S552 carries the post-translational modification Phosphoserine. The tract at residues 562–586 is disordered; it reads LKSTQNKGTTSKISNSSEGEAQSEH. Over residues 563–581 the composition is skewed to polar residues; the sequence is KSTQNKGTTSKISNSSEGE. BRCT domains are found at residues 644–734 and 755–837; these read SGRG…PFEL and YRGT…NYLL.

Interacts with CDC27 and maybe other components of the APC/C complex. Interacts with histone variant H2AX under DNA damage conditions.

It is found in the cytoplasm. The protein resides in the cytoskeleton. Its subcellular location is the microtubule organizing center. The protein localises to the centrosome. In terms of biological role, implicated in chromosome condensation and DNA damage induced cellular responses. May play a role in neurogenesis and regulation of the size of the cerebral cortex. The chain is Microcephalin from Hylobates lar (Lar gibbon).